The primary structure comprises 227 residues: UPF0173 metal-dependent hydrolase BCB4264_A4722 (227 aa).

The protein belongs to the UPF0173 family.

The sequence is that of UPF0173 metal-dependent hydrolase BCB4264_A4722 from Bacillus cereus (strain B4264).